We begin with the raw amino-acid sequence, 286 residues long: Shikimate dehydrogenase (NADP(+)) (286 aa).

Shikimate contacts are provided by residues Ser-19–Ser-21 and Thr-66. Lys-70 functions as the Proton acceptor in the catalytic mechanism. Shikimate-binding residues include Asn-91 and Asp-106. NADP(+) contacts are provided by residues Gly-130–Ser-134 and Ala-225. Tyr-227 contacts shikimate. Gly-248 is a binding site for NADP(+).

It belongs to the shikimate dehydrogenase family. Homodimer.

It catalyses the reaction shikimate + NADP(+) = 3-dehydroshikimate + NADPH + H(+). It participates in metabolic intermediate biosynthesis; chorismate biosynthesis; chorismate from D-erythrose 4-phosphate and phosphoenolpyruvate: step 4/7. In terms of biological role, involved in the biosynthesis of the chorismate, which leads to the biosynthesis of aromatic amino acids. Catalyzes the reversible NADPH linked reduction of 3-dehydroshikimate (DHSA) to yield shikimate (SA). This chain is Shikimate dehydrogenase (NADP(+)), found in Dehalococcoides mccartyi (strain ATCC BAA-2266 / KCTC 15142 / 195) (Dehalococcoides ethenogenes (strain 195)).